The chain runs to 596 residues: NADH-quinone oxidoreductase subunit C/D (596 aa).

An NADH dehydrogenase I subunit C region spans residues 1–186 (MTDLTAQEPA…SPFELTKAKQ (186 aa)). The tract at residues 210–596 (DFMFLNLGPN…IDFVMSDVDR (387 aa)) is NADH dehydrogenase I subunit D.

In the N-terminal section; belongs to the complex I 30 kDa subunit family. It in the C-terminal section; belongs to the complex I 49 kDa subunit family. NDH-1 is composed of 13 different subunits. Subunits NuoB, CD, E, F, and G constitute the peripheral sector of the complex.

The protein resides in the cell inner membrane. The catalysed reaction is a quinone + NADH + 5 H(+)(in) = a quinol + NAD(+) + 4 H(+)(out). Functionally, NDH-1 shuttles electrons from NADH, via FMN and iron-sulfur (Fe-S) centers, to quinones in the respiratory chain. The immediate electron acceptor for the enzyme in this species is believed to be ubiquinone. Couples the redox reaction to proton translocation (for every two electrons transferred, four hydrogen ions are translocated across the cytoplasmic membrane), and thus conserves the redox energy in a proton gradient. The sequence is that of NADH-quinone oxidoreductase subunit C/D from Shigella flexneri serotype 5b (strain 8401).